We begin with the raw amino-acid sequence, 186 residues long: Hydra actinoporin-like toxin 1 (186 aa).

The first 18 residues, 1–18 (MLLYICLVNLLLPLSVGA), serve as a signal peptide directing secretion. An N-terminal region region spans residues 29–48 (KVGVDAALQQIDDVWKGKTV). The Cell attachment site, crucial for protein stability motif lies at 158-160 (RAG).

It belongs to the actinoporin family. HALT subfamily. In terms of assembly, octamer or nonamer in membranes. Monomer in the soluble state. In vitro, interacts with folate receptor alpha (of target organism). As to expression, expressed female germline during oogenesis.

Its subcellular location is the nematocyst. The protein resides in the secreted. It is found in the target cell membrane. Its function is as follows. Pore-forming protein that forms hydrophilic pores and causes cytolysis. Compared to equinatoxin-2 (AC P61914), it reveals lower cytolysis activity (5-12-fold difference, tested on erythrocytes), a larger pore size (probably 2-3 nm) and different affinity to membrane lipids (100-fold lower affinity to sphingomyelin). Binds to sulfatides (SFT) as well as to the two sphingolipids, lysophosphatidic acid (LPA) and sphingosine-1-phosphate (S1P). It seems to bind more strongly to LPA than to S1P and SFT. Shows cytolytic activity on HeLa cells, with a different potency than its paralogs (from most potent to less potent: HALT-4&gt;HALT-6~HALT-1&gt;HALT-3&gt;HALT-7&gt;HALT-2). Pore formation is a multi-step process that involves specific recognition of membrane lipid by a protein aromatic residues rich region, firm binding to the membrane (mainly driven by hydrophobic interactions) accompanied by the transfer of the N-terminal region to the lipid-water interface and finally pore formation after oligomerization of monomers. In vitro, binds to the folate receptor alpha (FOLR1), a GPI-anchored membrane protein that plays a major role in the uptake of folate/folic acid into cells via endocytosis, suggesting a possible involvement of this receptor in the mechanism of HALT-1-induced cell lysis. In vivo, does not cause visible paralysis in larvae of the blowfly Sarcophaga faculata, the most common arthropod prey of Hydra. The protein is Hydra actinoporin-like toxin 1 of Hydra vulgaris (Hydra).